The chain runs to 486 residues: uncharacterized protein (486 aa).

A helical transmembrane segment spans residues 18–38; that stretch reads TLLQLFVFTVICVFVLSGLAI. Over residues 62–79 the composition is skewed to basic and acidic residues; sequence DRQKQMEKQQDSGEKRSF. Disordered regions lie at residues 62–82 and 117–147; these read DRQK…FEST and IESS…GPQM. A compositionally biased stretch (low complexity) spans 119–132; it reads SSSSSDSSSSSSSS. 3 helical membrane passes run 324 to 344, 365 to 385, and 451 to 471; these read VVYL…MMSI, IGQF…LASV, and MLIL…LPSI.

This sequence belongs to the ABC-4 integral membrane protein family.

It localises to the cell membrane. This is an uncharacterized protein from Bacillus subtilis (strain 168).